The sequence spans 299 residues: Very long chain fatty acid elongase 5 (299 aa).

Met-1 carries the post-translational modification N-acetylmethionine. The next 7 membrane-spanning stretches (helical) occupy residues 26 to 46 (WFLL…LLIV), 64 to 84 (ILVV…CELV), 112 to 132 (VLWW…FFIL), 150 to 170 (MLNI…YFGA), 172 to 192 (LNSF…VLSM), 205 to 225 (GQLL…IWPC), and 226 to 246 (TFPL…IALF). The interval 262–299 (RKDHLKDHQNGSKAAVNGHTNSFSPLENNVKPRKLRKD) is disordered. The segment covering 279 to 288 (GHTNSFSPLE) has biased composition (polar residues). At Ser-285 the chain carries Phosphoserine.

This sequence belongs to the ELO family. ELOVL5 subfamily. As to quaternary structure, interacts with TECR.

The protein localises to the endoplasmic reticulum membrane. The protein resides in the cell projection. Its subcellular location is the dendrite. The catalysed reaction is a very-long-chain acyl-CoA + malonyl-CoA + H(+) = a very-long-chain 3-oxoacyl-CoA + CO2 + CoA. It carries out the reaction (6Z,9Z,12Z)-octadecatrienoyl-CoA + malonyl-CoA + H(+) = (8Z,11Z,14Z)-3-oxoeicosatrienoyl-CoA + CO2 + CoA. It catalyses the reaction (9Z,12Z,15Z)-octadecatrienoyl-CoA + malonyl-CoA + H(+) = (11Z,14Z,17Z)-3-oxoeicosatrienoyl-CoA + CO2 + CoA. The enzyme catalyses (9Z)-hexadecenoyl-CoA + malonyl-CoA + H(+) = 3-oxo-(11Z)-octadecenoyl-CoA + CO2 + CoA. The catalysed reaction is (9Z)-octadecenoyl-CoA + malonyl-CoA + H(+) = 3-oxo-(11Z)-eicosenoyl-CoA + CO2 + CoA. It carries out the reaction (11Z)-octadecenoyl-CoA + malonyl-CoA + H(+) = 3-oxo-(13Z)-eicosenoyl-CoA + CO2 + CoA. It catalyses the reaction (9Z,12Z)-octadecadienoyl-CoA + malonyl-CoA + H(+) = (11Z,14Z)-3-oxoicosa-11,14-dienoyl-CoA + CO2 + CoA. The enzyme catalyses (6Z,9Z,12Z,15Z)-octadecatetraenoyl-CoA + malonyl-CoA + H(+) = (8Z,11Z,14Z,17Z)-3-oxoicosatetraenoyl-CoA + CO2 + CoA. The catalysed reaction is (5Z,8Z,11Z,14Z)-eicosatetraenoyl-CoA + malonyl-CoA + H(+) = (7Z,10Z,13Z,16Z)-3-oxodocosatetraenoyl-CoA + CO2 + CoA. It carries out the reaction (5Z,8Z,11Z,14Z,17Z)-eicosapentaenoyl-CoA + malonyl-CoA + H(+) = 3-oxo-(7Z,10Z,13Z,16Z,19Z)-docosapentaenoyl-CoA + CO2 + CoA. It functions in the pathway lipid metabolism; polyunsaturated fatty acid biosynthesis. In terms of biological role, catalyzes the first and rate-limiting reaction of the four reactions that constitute the long-chain fatty acids elongation cycle. This endoplasmic reticulum-bound enzymatic process allows the addition of 2 carbons to the chain of long- and very long-chain fatty acids (VLCFAs) per cycle. Condensing enzyme that acts specifically toward polyunsaturated acyl-CoA with the higher activity toward C18:3(n-6) acyl-CoA. May participate in the production of monounsaturated and of polyunsaturated VLCFAs of different chain lengths that are involved in multiple biological processes as precursors of membrane lipids and lipid mediators. In conditions where the essential linoleic and alpha linoleic fatty acids are lacking it is also involved in the synthesis of Mead acid from oleic acid. In Pongo abelii (Sumatran orangutan), this protein is Very long chain fatty acid elongase 5.